A 121-amino-acid polypeptide reads, in one-letter code: Large-conductance mechanosensitive channel (121 aa).

The next 2 membrane-spanning stretches (helical) occupy residues 14–34 (VLDLAVGVIIGAAFTALVKSL) and 67–87 (GAFLNDVINFVITAFVIFVLI).

This sequence belongs to the MscL family. As to quaternary structure, homopentamer.

It localises to the cell membrane. In terms of biological role, channel that opens in response to stretch forces in the membrane lipid bilayer. May participate in the regulation of osmotic pressure changes within the cell. The sequence is that of Large-conductance mechanosensitive channel from Lactococcus lactis subsp. cremoris (strain SK11).